Reading from the N-terminus, the 452-residue chain is UPF0210 protein Hore_14430 (452 aa).

It belongs to the UPF0210 family. Homodimer.

In Halothermothrix orenii (strain H 168 / OCM 544 / DSM 9562), this protein is UPF0210 protein Hore_14430.